The chain runs to 358 residues: Phospho-N-acetylmuramoyl-pentapeptide-transferase (358 aa).

Helical transmembrane passes span 24–44, 73–93, 95–115, 134–154, 169–189, 197–217, 233–253, 261–281, 286–306, and 335–355; these read FRSI…GPWV, TMGG…WADL, NVFI…GFVD, MFWQ…LPGF, ELGI…SNAV, GLAI…CYIA, GAGE…GFLW, VFMG…LAVL, ILLV…IFQV, and KIIV…ISTL.

This sequence belongs to the glycosyltransferase 4 family. MraY subfamily. It depends on Mg(2+) as a cofactor.

The protein localises to the cell inner membrane. It catalyses the reaction UDP-N-acetyl-alpha-D-muramoyl-L-alanyl-gamma-D-glutamyl-meso-2,6-diaminopimeloyl-D-alanyl-D-alanine + di-trans,octa-cis-undecaprenyl phosphate = di-trans,octa-cis-undecaprenyl diphospho-N-acetyl-alpha-D-muramoyl-L-alanyl-D-glutamyl-meso-2,6-diaminopimeloyl-D-alanyl-D-alanine + UMP. The protein operates within cell wall biogenesis; peptidoglycan biosynthesis. Functionally, catalyzes the initial step of the lipid cycle reactions in the biosynthesis of the cell wall peptidoglycan: transfers peptidoglycan precursor phospho-MurNAc-pentapeptide from UDP-MurNAc-pentapeptide onto the lipid carrier undecaprenyl phosphate, yielding undecaprenyl-pyrophosphoryl-MurNAc-pentapeptide, known as lipid I. The polypeptide is Phospho-N-acetylmuramoyl-pentapeptide-transferase (Citrifermentans bemidjiense (strain ATCC BAA-1014 / DSM 16622 / JCM 12645 / Bem) (Geobacter bemidjiensis)).